We begin with the raw amino-acid sequence, 563 residues long: Type 2 DNA topoisomerase 6 subunit B (563 aa).

ATP-binding positions include N46, D78, 99–100 (TK), 109–116 (GQQGIGIS), and K471.

Belongs to the TOP6B family. Homodimer. Heterotetramer of two Top6A and two Top6B chains.

It catalyses the reaction ATP-dependent breakage, passage and rejoining of double-stranded DNA.. In terms of biological role, relaxes both positive and negative superturns and exhibits a strong decatenase activity. The protein is Type 2 DNA topoisomerase 6 subunit B of Thermococcus onnurineus (strain NA1).